Here is a 990-residue protein sequence, read N- to C-terminus: Protein argonaute 7 (990 aa).

Positions 1-13 are enriched in basic residues; it reads MEEKTHHHHHSTN. The disordered stretch occupies residues 1 to 25; sequence MEEKTHHHHHSTNKHIPSSKSRTPL. The region spanning 379–484 is the PAZ domain; it reads EFLTDLPRNK…LPMELCMICE (106 aa). Residues 649-950 enclose the Piwi domain; sequence LIICVMEKKH…AAYRGRLYIE (302 aa). The interval 953 to 973 is disordered; sequence SESNGGSMNPSSVSRVGPPKT. Over residues 954 to 966 the composition is skewed to polar residues; the sequence is ESNGGSMNPSSVS.

Belongs to the argonaute family. Ago subfamily. Expressed in leaves and floral buds, and at low levels in roots.

In terms of biological role, involved in RNA-mediated post-transcriptional gene silencing (PTGS). Main component of the RNA-induced silencing complex (RISC) that binds to a short guide RNA such as a microRNA (miRNA) or small interfering RNA (siRNA). RISC uses the mature miRNA or siRNA as a guide for slicer-directed cleavage of homologous mRNAs to repress gene expression. Required for the processing of 21 nucleotide trans-acting siRNAs (ta-siRNAs) derived from TAS3a transcripts. Associates preferentially with the microRNA (miRNA) miR390 which guides the cleavage of TAS3 precursor RNA. Seems to act as miR390 specific slicer. Associates mainly with small RNAs of 21 nucleotide in length and with a 5' terminal adenosine. Acts in the RDR6/SGS3/DCL4/AGO7 trans-acting siRNA pathway involved in leaf developmental timing. Does not seem to act on leaf polarity. Required for the production of the 30-40nt bacterial-induced long siRNAs (lsiRNA). Involved in antiviral RNA silencing by contributing to efficient viral RNAs clearance. Targets less structured viral RNAs than AGO1 which is capable of targeting RNAs with more compact structures. This chain is Protein argonaute 7 (AGO7), found in Arabidopsis thaliana (Mouse-ear cress).